A 100-amino-acid chain; its full sequence is Small ribosomal subunit protein uS14c (100 aa).

The protein belongs to the universal ribosomal protein uS14 family. As to quaternary structure, part of the 30S ribosomal subunit.

It is found in the plastid. It localises to the chloroplast. Its function is as follows. Binds 16S rRNA, required for the assembly of 30S particles. The chain is Small ribosomal subunit protein uS14c from Ceratophyllum demersum (Rigid hornwort).